Here is an 83-residue protein sequence, read N- to C-terminus: Toxin To12 (83 aa).

An N-terminal signal peptide occupies residues 1 to 19 (MKGLILFICGFMMIGVILA). Residues 20–82 (KEGYPMDHEG…VWDYYNNKCG (63 aa)) form the LCN-type CS-alpha/beta domain. Intrachain disulfides connect cysteine 30–cysteine 81, cysteine 34–cysteine 57, cysteine 42–cysteine 62, and cysteine 46–cysteine 64. Cysteine 81 carries the post-translational modification Cysteine amide.

It belongs to the long (4 C-C) scorpion toxin superfamily. Sodium channel inhibitor family. Beta subfamily. As to expression, expressed by the venom gland.

It localises to the secreted. In terms of biological role, beta toxins bind voltage-independently at site-4 of sodium channels (Nav) and shift the voltage of activation toward more negative potentials thereby affecting sodium channel activation and promoting spontaneous and repetitive firing. The polypeptide is Toxin To12 (Tityus obscurus (Amazonian scorpion)).